A 171-amino-acid chain; its full sequence is Large ribosomal subunit protein bL21 (171 aa).

Residues A144–A171 are disordered. Positions K154–A163 are enriched in basic residues.

It belongs to the bacterial ribosomal protein bL21 family. As to quaternary structure, part of the 50S ribosomal subunit. Contacts protein L20.

In terms of biological role, this protein binds to 23S rRNA in the presence of protein L20. The protein is Large ribosomal subunit protein bL21 of Caulobacter vibrioides (strain ATCC 19089 / CIP 103742 / CB 15) (Caulobacter crescentus).